Here is a 296-residue protein sequence, read N- to C-terminus: Cytochrome bc1 complex cytochrome c subunit (296 aa).

The span at 1 to 19 shows a compositional bias: polar residues; it reads MMETNPQTSEGAGKAQSSA. The segment at 1 to 27 is disordered; sequence MMETNPQTSEGAGKAQSSAKKVKNRRK. Residues 32 to 52 form a helical membrane-spanning segment; sequence VAGAMALTIGLSGAGILATAI. Cytochrome c domains lie at 67–147 and 177–255; these read ALIA…AANG and LDVS…KSTK. 6 residues coordinate heme c: cysteine 80, cysteine 83, histidine 84, cysteine 190, cysteine 193, and histidine 194. The chain crosses the membrane as a helical span at residues 274-294; sequence GLFMWGIGIMVLIAAAMWIGS.

As to quaternary structure, the cytochrome bc1 complex is composed of a cytochrome b (QcrB), the Rieske iron-sulfur protein (QcrA) and a diheme cytochrome c (QcrC) subunit. The bc1 complex forms a supercomplex with cytochrome c oxidase (cytochrome aa3). Binds 2 heme c groups covalently per subunit.

It is found in the cell membrane. The catalysed reaction is a quinol + 2 Fe(III)-[cytochrome c](out) = a quinone + 2 Fe(II)-[cytochrome c](out) + 2 H(+)(out). Cytochrome c1 subunit of the cytochrome bc1 complex, an essential component of the respiratory electron transport chain required for ATP synthesis. The bc1 complex catalyzes the oxidation of menaquinol and the reduction of cytochrome c in the respiratory chain. The bc1 complex operates through a Q-cycle mechanism that couples electron transfer to generation of the proton gradient that drives ATP synthesis. The polypeptide is Cytochrome bc1 complex cytochrome c subunit (qcrC) (Corynebacterium efficiens (strain DSM 44549 / YS-314 / AJ 12310 / JCM 11189 / NBRC 100395)).